We begin with the raw amino-acid sequence, 145 residues long: CASP-like protein SELMODRAFT_406854 (145 aa).

Topologically, residues 1 to 31 (MGVASQSSVANEAGAAPEASIQQTLRGFSSP) are cytoplasmic. Residues 32-52 (TSLLLRIATAVLCTLTLAFLV) form a helical membrane-spanning segment. Over 53-75 (TSKERKEIASIDIVAIWSNSKAL) the chain is Extracellular. Residues 76-96 (IFLAVVSGICLGYSLLHAAVF) traverse the membrane as a helical segment. At 97–112 (LVMLSGNRKPLARKKA) the chain is on the cytoplasmic side. The chain crosses the membrane as a helical span at residues 113-133 (LDWMVFLADQVFFKIFCWFSI). The Extracellular segment spans residues 134–145 (RVSSRRSKAGFV).

Belongs to the Casparian strip membrane proteins (CASP) family. As to quaternary structure, homodimer and heterodimers.

The protein localises to the cell membrane. The protein is CASP-like protein SELMODRAFT_406854 of Selaginella moellendorffii (Spikemoss).